Consider the following 351-residue polypeptide: Transcription factor Atoh1 (351 aa).

Disordered stretches follow at residues 16–39 (LGDHHRHPQPHHVPPLTPQPPATL) and 89–116 (EAAAPRDEADSQGELVRRSGCGGLSKSP). The span at 26-36 (HHVPPLTPQPP) shows a compositional bias: pro residues. A bHLH domain is found at 156 to 208 (QRRLAANARERRRMHGLNHAFDQLRNVIPSFNNDKKLSKYETLQMAQIYINAL). Disordered stretches follow at residues 244-278 (GAGASAVAGAQPAPGGGPRPTPPGPCRTRFSGPAS) and 308-351 (LSPS…DEAS). Residues 247 to 256 (ASAVAGAQPA) show a composition bias toward low complexity. Residues 258-268 (GGGPRPTPPGP) are compositionally biased toward pro residues. The segment covering 332–351 (HRSDGEFSPHSHYSDSDEAS) has biased composition (basic and acidic residues).

As to quaternary structure, efficient DNA binding requires dimerization with another bHLH protein. As to expression, developing nervous system, and in adult epithelial cells of the gastrointestinal tract.

It localises to the nucleus. Transcriptional regulator. Activates E box-dependent transcription in collaboration with TCF3/E47, but the activity is completely antagonized by the negative regulator of neurogenesis HES1. Plays a role in the differentiation of subsets of neural cells by activating E box-dependent transcription. This chain is Transcription factor Atoh1, found in Mus musculus (Mouse).